The primary structure comprises 663 residues: Guanine nucleotide exchange factor subunit RGP1 (663 aa).

Phosphoserine occurs at positions 351, 354, 357, 363, 364, and 370. The interval 412–443 (GKDEDSSDPEPNDSHFSNEMVTSAESSLRSDA) is disordered. Polar residues predominate over residues 426 to 440 (HFSNEMVTSAESSLR).

Belongs to the RGP1 family. As to quaternary structure, forms a complex with RIC1.

The protein localises to the golgi apparatus. In terms of biological role, the RIC1-RGP1 complex acts as a guanine nucleotide exchange factor (GEF), which activates YPT6 by exchanging bound GDP for free GTP. It is thereby required for efficient fusion of endosome-derived vesicles with the Golgi. The RIC1-RGP1 participates in the recycling of SNC1, presumably by mediating fusion of endosomal vesicles with the Golgi compartment. Its function is as follows. Required for proper mitotic growth. This Saccharomyces cerevisiae (strain ATCC 204508 / S288c) (Baker's yeast) protein is Guanine nucleotide exchange factor subunit RGP1.